The following is a 469-amino-acid chain: Argininosuccinate lyase (469 aa).

The protein belongs to the lyase 1 family. Argininosuccinate lyase subfamily.

It is found in the cytoplasm. It carries out the reaction 2-(N(omega)-L-arginino)succinate = fumarate + L-arginine. The protein operates within amino-acid biosynthesis; L-arginine biosynthesis; L-arginine from L-ornithine and carbamoyl phosphate: step 3/3. The sequence is that of Argininosuccinate lyase from Polaromonas naphthalenivorans (strain CJ2).